The chain runs to 309 residues: Homoserine kinase (309 aa).

Residue 91–101 (PIGSGLGSSAC) coordinates ATP.

It belongs to the GHMP kinase family. Homoserine kinase subfamily.

It localises to the cytoplasm. The enzyme catalyses L-homoserine + ATP = O-phospho-L-homoserine + ADP + H(+). It functions in the pathway amino-acid biosynthesis; L-threonine biosynthesis; L-threonine from L-aspartate: step 4/5. In terms of biological role, catalyzes the ATP-dependent phosphorylation of L-homoserine to L-homoserine phosphate. The sequence is that of Homoserine kinase from Photorhabdus laumondii subsp. laumondii (strain DSM 15139 / CIP 105565 / TT01) (Photorhabdus luminescens subsp. laumondii).